Reading from the N-terminus, the 697-residue chain is Elongation factor G (697 aa).

The tr-type G domain maps to 10 to 285; sequence AKTRNIGIMA…GVIDYLPSPL (276 aa). GTP-binding positions include 19–26, 83–87, and 137–140; these read AHIDAGKT, DTPGH, and NKMD.

This sequence belongs to the TRAFAC class translation factor GTPase superfamily. Classic translation factor GTPase family. EF-G/EF-2 subfamily.

The protein resides in the cytoplasm. Catalyzes the GTP-dependent ribosomal translocation step during translation elongation. During this step, the ribosome changes from the pre-translocational (PRE) to the post-translocational (POST) state as the newly formed A-site-bound peptidyl-tRNA and P-site-bound deacylated tRNA move to the P and E sites, respectively. Catalyzes the coordinated movement of the two tRNA molecules, the mRNA and conformational changes in the ribosome. The sequence is that of Elongation factor G from Lactobacillus acidophilus (strain ATCC 700396 / NCK56 / N2 / NCFM).